The chain runs to 364 residues: Dihydroorotate dehydrogenase (quinone) (364 aa).

FMN-binding positions include 61–65 (AGYDK) and Thr-85. Residue Lys-65 coordinates substrate. 110–114 (NRLGF) contributes to the substrate binding site. Residues Asn-139 and Asn-170 each coordinate FMN. Position 170 (Asn-170) interacts with substrate. Catalysis depends on Ser-173, which acts as the Nucleophile. Asn-175 lines the substrate pocket. FMN is bound by residues Lys-215 and Ser-243. 244-245 (NT) contacts substrate. FMN-binding positions include Gly-266, Gly-295, and 316 to 317 (YT).

The protein belongs to the dihydroorotate dehydrogenase family. Type 2 subfamily. As to quaternary structure, monomer. The cofactor is FMN.

The protein resides in the cell membrane. The catalysed reaction is (S)-dihydroorotate + a quinone = orotate + a quinol. The protein operates within pyrimidine metabolism; UMP biosynthesis via de novo pathway; orotate from (S)-dihydroorotate (quinone route): step 1/1. Its function is as follows. Catalyzes the conversion of dihydroorotate to orotate with quinone as electron acceptor. This Brucella abortus (strain S19) protein is Dihydroorotate dehydrogenase (quinone).